A 124-amino-acid polypeptide reads, in one-letter code: Ribonuclease P protein component (124 aa).

It belongs to the RnpA family. As to quaternary structure, consists of a catalytic RNA component (M1 or rnpB) and a protein subunit.

The catalysed reaction is Endonucleolytic cleavage of RNA, removing 5'-extranucleotides from tRNA precursor.. Functionally, RNaseP catalyzes the removal of the 5'-leader sequence from pre-tRNA to produce the mature 5'-terminus. It can also cleave other RNA substrates such as 4.5S RNA. The protein component plays an auxiliary but essential role in vivo by binding to the 5'-leader sequence and broadening the substrate specificity of the ribozyme. This is Ribonuclease P protein component from Maridesulfovibrio salexigens (strain ATCC 14822 / DSM 2638 / NCIMB 8403 / VKM B-1763) (Desulfovibrio salexigens).